The primary structure comprises 580 residues: Trafficking protein particle complex subunit 14 (580 aa).

Disordered stretches follow at residues 90–138 (GMPG…ATTL) and 480–533 (VSHP…RSGS). The span at 105 to 116 (PGGGDPGGGGLF) shows a compositional bias: gly residues. Residues 124–137 (THGPGPATSGGATT) show a composition bias toward low complexity. Serine 491 bears the Phosphoserine mark. The segment covering 492–502 (RKSSPSSPAVR) has biased composition (low complexity). Residues 512 to 525 (LGRSQSFSHQQPSR) are compositionally biased toward polar residues. Serine 517 is subject to Phosphoserine. Phosphothreonine is present on threonine 541. Serine 546 carries the phosphoserine modification.

Component of the multisubunit TRAPP II complex, which includes at least TRAPPC1, TRAPPC2, TRAPPC2L, TRAPPC3, TRAPPC4, TRAPPC5, TRAPPC6A/B, TRAPPC9, TRAPPC10 and TRAPPC14. TRAPPC9, TRAPPC10 and TRAPPC14 are specific subunits of the TRAPP II complex. Interacts with alpha-tubulin during mitosis. Interacts with RAB3IP (via the N-terminal region); this interaction mediates RAB3IP association with the TRAPP II complex. Interacts with TRAPPC10. Interacts with FBF1. As to expression, broadly expressed. High levels in brain, cerebellum, testis and whole blood.

It is found in the cytoplasm. The protein localises to the cytoskeleton. Its subcellular location is the spindle. It localises to the vesicle. The protein resides in the midbody. Specific subunit of the TRAPP (transport protein particle) II complex, a highly conserved vesicle tethering complex that functions in late Golgi trafficking as a membrane tether. TRAPP II complex also has GEF activity toward RAB1A. TRAPPC14 is dispensable for TRAPPII complex integrity but mediates RAB3IP preciliary vesicle trafficking to the mother centriole during ciliogenesis. Modulates YAP1 activity as transcriptional regulator. The chain is Trafficking protein particle complex subunit 14 from Homo sapiens (Human).